Reading from the N-terminus, the 202-residue chain is MHNASDIQSALVPMVIEQTAKGERSYDIYSRLLKERIIFLVGQVEEHMANLIVAQLLFLESESPDKDIFLYINSPGGSVTAGMAIYDTMQFIKPNVSTVCIGQAASMGAFLLAGGEKGKRHCLPNSRVMIHQPLGGFQGQASDIAIHAKEILGIKNKLNQMLAEHTGQPLEVVERDTDRDNFMSATQAVEYGLVDSVMTKRG.

Residue S106 is the Nucleophile of the active site. Residue H131 is part of the active site.

It belongs to the peptidase S14 family. As to quaternary structure, fourteen ClpP subunits assemble into 2 heptameric rings which stack back to back to give a disk-like structure with a central cavity, resembling the structure of eukaryotic proteasomes.

It is found in the cytoplasm. It catalyses the reaction Hydrolysis of proteins to small peptides in the presence of ATP and magnesium. alpha-casein is the usual test substrate. In the absence of ATP, only oligopeptides shorter than five residues are hydrolyzed (such as succinyl-Leu-Tyr-|-NHMec, and Leu-Tyr-Leu-|-Tyr-Trp, in which cleavage of the -Tyr-|-Leu- and -Tyr-|-Trp bonds also occurs).. Cleaves peptides in various proteins in a process that requires ATP hydrolysis. Has a chymotrypsin-like activity. Plays a major role in the degradation of misfolded proteins. The chain is ATP-dependent Clp protease proteolytic subunit from Shewanella baltica (strain OS223).